The primary structure comprises 430 residues: Enolase (430 aa).

The segment at 1-140 is sufficient for secretion; it reads MPYIVDVYAR…YQYLGGFNSK (140 aa). A Phosphothreonine modification is found at threonine 141. Glutamine 163 lines the (2R)-2-phosphoglycerate pocket. Residue glutamate 205 is the Proton donor of the active site. Aspartate 242 is a Mg(2+) binding site. At serine 259 the chain carries Phosphoserine. Phosphotyrosine is present on tyrosine 281. Residues glutamate 287 and aspartate 314 each coordinate Mg(2+). Serine 325 bears the Phosphoserine mark. Residues lysine 339, arginine 368, serine 369, and lysine 390 each contribute to the (2R)-2-phosphoglycerate site. Lysine 339 acts as the Proton acceptor in catalysis.

Belongs to the enolase family. In terms of assembly, homooctamer. Component of the RNA degradosome complex composed of rny, rnjA, rnjB, pnp, pfkA and eno (although rnjA and rnjB's presence is controversial). The cofactor is Mg(2+). Phosphorylated during sporulation.

It is found in the cytoplasm. The protein resides in the secreted. The protein localises to the cell surface. It carries out the reaction (2R)-2-phosphoglycerate = phosphoenolpyruvate + H2O. Its pathway is carbohydrate degradation; glycolysis; pyruvate from D-glyceraldehyde 3-phosphate: step 4/5. Its activity is regulated as follows. Covalent binding to the substrate (probably 2-PG) at Lys-339 of a small fraction of enolase causes inactivation of the enzyme, and possibly serves as a signal for the export of the protein. Citrate acts as a non-competitive inhibitor for both forward and reverse reactions, probably by chelating Mg(2+). Its function is as follows. Catalyzes the reversible conversion of 2-phosphoglycerate (2-PG) into phosphoenolpyruvate (PEP). It is essential for the degradation of carbohydrates via glycolysis. Functionally, a component of the RNA degradosome, a multi-enzyme complex involved in RNA processing and messenger RNA degradation. This chain is Enolase, found in Bacillus subtilis (strain 168).